The primary structure comprises 937 residues: Protein translocase subunit SecA (937 aa).

ATP is bound by residues Q86, 104–108, and D493; that span reads GEGKT. Residues 868 to 889 are disordered; the sequence is LERPSQPTKLAYSAPSEDGDAE. 4 residues coordinate Zn(2+): C911, C913, C922, and H923. The tract at residues 915-937 is disordered; it reads SGKKFKQCHGRPGGPTGLTARVS.

It belongs to the SecA family. Monomer and homodimer. Part of the essential Sec protein translocation apparatus which comprises SecA, SecYEG and auxiliary proteins SecDF. Other proteins may also be involved. Requires Zn(2+) as cofactor.

It localises to the cell membrane. It is found in the cytoplasm. The catalysed reaction is ATP + H2O + cellular proteinSide 1 = ADP + phosphate + cellular proteinSide 2.. Part of the Sec protein translocase complex. Interacts with the SecYEG preprotein conducting channel. Has a central role in coupling the hydrolysis of ATP to the transfer of proteins into and across the cell membrane, serving as an ATP-driven molecular motor driving the stepwise translocation of polypeptide chains across the membrane. This is Protein translocase subunit SecA from Nocardioides sp. (strain ATCC BAA-499 / JS614).